The sequence spans 449 residues: Allantoinase (449 aa).

6 residues coordinate Zn(2+): H61, H63, K148, H184, H240, and D313. K148 is modified (N6-carboxylysine).

The protein belongs to the metallo-dependent hydrolases superfamily. Allantoinase family. In terms of assembly, homotetramer. Requires Zn(2+) as cofactor. In terms of processing, carboxylation allows a single lysine to coordinate two zinc ions.

It carries out the reaction (S)-allantoin + H2O = allantoate + H(+). The protein operates within nitrogen metabolism; (S)-allantoin degradation; allantoate from (S)-allantoin: step 1/1. Functionally, catalyzes the conversion of allantoin (5-ureidohydantoin) to allantoic acid by hydrolytic cleavage of the five-member hydantoin ring. The chain is Allantoinase from Desulfitobacterium hafniense (strain Y51).